The sequence spans 156 residues: 6,7-dimethyl-8-ribityllumazine synthase (156 aa).

Residues phenylalanine 23, 57–59, and 81–83 contribute to the 5-amino-6-(D-ribitylamino)uracil site; these read SFE and AVI. A (2S)-2-hydroxy-3-oxobutyl phosphate-binding site is contributed by 86-87; that stretch reads GT. Residue histidine 89 is the Proton donor of the active site. Phenylalanine 114 contacts 5-amino-6-(D-ribitylamino)uracil. (2S)-2-hydroxy-3-oxobutyl phosphate is bound at residue arginine 128.

It belongs to the DMRL synthase family. Forms an icosahedral capsid composed of 60 subunits, arranged as a dodecamer of pentamers.

It catalyses the reaction (2S)-2-hydroxy-3-oxobutyl phosphate + 5-amino-6-(D-ribitylamino)uracil = 6,7-dimethyl-8-(1-D-ribityl)lumazine + phosphate + 2 H2O + H(+). Its pathway is cofactor biosynthesis; riboflavin biosynthesis; riboflavin from 2-hydroxy-3-oxobutyl phosphate and 5-amino-6-(D-ribitylamino)uracil: step 1/2. Functionally, catalyzes the formation of 6,7-dimethyl-8-ribityllumazine by condensation of 5-amino-6-(D-ribitylamino)uracil with 3,4-dihydroxy-2-butanone 4-phosphate. This is the penultimate step in the biosynthesis of riboflavin. In Alkalilimnicola ehrlichii (strain ATCC BAA-1101 / DSM 17681 / MLHE-1), this protein is 6,7-dimethyl-8-ribityllumazine synthase.